Consider the following 100-residue polypeptide: Small ribosomal subunit protein bS20 (100 aa).

Positions 1 to 20 (MASGKPKKKNPRLASGRKRV) are enriched in basic residues. The segment at 1–21 (MASGKPKKKNPRLASGRKRVR) is disordered.

The protein belongs to the bacterial ribosomal protein bS20 family.

Its function is as follows. Binds directly to 16S ribosomal RNA. In Albidiferax ferrireducens (strain ATCC BAA-621 / DSM 15236 / T118) (Rhodoferax ferrireducens), this protein is Small ribosomal subunit protein bS20.